Consider the following 568-residue polypeptide: Putative F-box protein At5g39480 (568 aa).

One can recognise an F-box domain in the interval 9 to 55; it reads ACLLLTLPEDVFAVISRFLSPSDICNLILCGKSLPALVDTEKMWLVQ. Residues 315 to 337 form a disordered region; the sequence is TNVLGESSSSKNTTPSQSEIRVS. The segment covering 321-332 has biased composition (low complexity); sequence SSSSKNTTPSQS.

In Arabidopsis thaliana (Mouse-ear cress), this protein is Putative F-box protein At5g39480.